The primary structure comprises 351 residues: Protein Wnt-2b-A (351 aa).

The first 16 residues, 1–16, serve as a signal peptide directing secretion; that stretch reads MHFAYILILLILTPRV. 11 disulfide bridges follow: Cys-67–Cys-78, Cys-118–Cys-126, Cys-128–Cys-148, Cys-197–Cys-211, Cys-199–Cys-206, Cys-269–Cys-300, Cys-285–Cys-295, Cys-299–Cys-339, Cys-315–Cys-330, Cys-317–Cys-327, and Cys-322–Cys-323. The N-linked (GlcNAc...) asparagine glycan is linked to Asn-77. A lipid anchor (O-palmitoleoyl serine; by PORCN) is attached at Ser-203.

It belongs to the Wnt family. In terms of processing, palmitoleoylation is required for efficient binding to frizzled receptors. Depalmitoleoylation leads to Wnt signaling pathway inhibition. Expressed maternally in both vegetal and animal blastomeres with enrichment in the animal hemisphere. Expressed zygotically near the prosencephalic-mesencephalic boundary of the developing brain in neurula and tailbud stages, and also in non-brain areas at tadpole stages.

The protein resides in the secreted. It is found in the extracellular space. The protein localises to the extracellular matrix. In terms of biological role, ligand for members of the frizzled family of seven transmembrane receptors. Functions in the canonical Wnt/beta-catenin signaling pathway. This chain is Protein Wnt-2b-A (wnt2b-a), found in Xenopus laevis (African clawed frog).